Reading from the N-terminus, the 255-residue chain is Probable iron chelatin transport ATP-binding protein HP_0888 (255 aa).

An ABC transporter domain is found at Leu3–Pro240. Position 35-42 (Ala35–Thr42) interacts with ATP.

Belongs to the ABC transporter superfamily.

Its subcellular location is the cell inner membrane. In terms of biological role, part of a binding-protein-dependent transport system for an iron chelatin. Probably responsible for energy coupling to the transport system (Potential). This is Probable iron chelatin transport ATP-binding protein HP_0888 from Helicobacter pylori (strain ATCC 700392 / 26695) (Campylobacter pylori).